The primary structure comprises 688 residues: MFFVTRLRLRARENGFFFSKSLSFSSASVLKSDDVEGEDDAIEAEDRRRSVTDRAYWRRRIHSICAVRRNPDEALRILDGLCLRGYRPDSLNLSSVIHSLCDAGRFDEAHRRFLLFLASGFIPDERTCNVIIARLLYSRSPVSTLGVIHRLIGFKKEFVPSLTNYNRLMNQLCTIYRVIDAHKLVFDMRNRGHLPDVVTFTTLIGGYCEIRELEVAHKVFDEMRVCGIRPNSLTLSVLIGGFLKMRDVETGRKLMKELWEYMKNETDTSMKAAAFANLVDSMCREGYFNDIFEIAENMSLCESVNVEFAYGHMIDSLCRYRRNHGAARIVYIMKSKGLKPRRTSYNAIIHGLCKDGGCMRAYQLLEEGSEFEFFPSEYTYKLLMESLCKELDTGKARNVLELMLRKEGADRTRIYNIYLRGLCVMDNPTEILNVLVSMLQGDCRPDEYTLNTVINGLCKMGRVDDAMKVLDDMMTGKFCAPDAVTLNTVMCGLLAQGRAEEALDVLNRVMPENKIKPGVVAYNAVIRGLFKLHKGDEAMSVFGQLEKASVTADSTTYAIIIDGLCVTNKVDMAKKFWDDVIWPSGRHDAFVYAAFLKGLCQSGYLSDACHFLYDLADSGAIPNVVCYNTVIAECSRSGLKREAYQILEEMRKNGQAPDAVTWRILDKLHDSMDLTVERELISNPATSG.

17 PPR repeats span residues 53-88 (DRAY…GYRP), 89-123 (DSLN…GFIP), 124-158 (DERT…KKEF), 161-195 (SLTN…GHLP), 196-230 (DVVT…GIRP), 231-261 (NSLT…LWEY), 271-305 (KAAA…ESVN), 306-340 (VEFA…GLKP), 341-375 (RRTS…EFFP), 376-406 (SEYT…MLRK), 411-445 (RTRI…DCRP), 446-480 (DEYT…KFCA), 482-517 (DAVT…KIKP), 518-552 (GVVA…SVTA), 553-583 (DSTT…VIWP), 588-622 (DAFV…GAIP), and 623-657 (NVVC…GQAP).

The protein belongs to the PPR family. P subfamily.

The chain is Pentatricopeptide repeat-containing protein At3g18020 from Arabidopsis thaliana (Mouse-ear cress).